Consider the following 402-residue polypeptide: Cysteine desulfurase NifS (402 aa).

Pyridoxal 5'-phosphate contacts are provided by residues 72-73 (GT), N151, Q179, and 199-201 (CGH). K202 carries the N6-(pyridoxal phosphate)lysine modification. A pyridoxal 5'-phosphate-binding site is contributed by T237. C325 serves as the catalytic Cysteine persulfide intermediate. Position 325 (C325) interacts with [2Fe-2S] cluster.

Belongs to the class-V pyridoxal-phosphate-dependent aminotransferase family. NifS/IscS subfamily. Homodimer. The cofactor is pyridoxal 5'-phosphate.

It carries out the reaction (sulfur carrier)-H + L-cysteine = (sulfur carrier)-SH + L-alanine. With respect to regulation, inhibited by equimolar concentrations of p-chloromercuribenzoic acid, iodoacetamide or N-ethylmaleimide. Its function is as follows. Catalyzes the removal of elemental sulfur atoms from cysteine to produce alanine. Seems to participate in the biosynthesis of the nitrogenase metalloclusters by providing the inorganic sulfur required for the Fe-S core formation. The protein is Cysteine desulfurase NifS of Azotobacter vinelandii.